Here is a 170-residue protein sequence, read N- to C-terminus: F107 fimbrial protein (170 aa).

A signal peptide spans 1–21 (MKRLVFISFVALSMTAGSAMA). A disulfide bond links C37 and C78.

Belongs to the fimbrial protein family.

It localises to the fimbrium. Fimbriae (also called pili), polar filaments radiating from the surface of the bacterium to a length of 0.5-1.5 micrometers and numbering 100-300 per cell, enable bacteria to colonize the epithelium of specific host organs. The chain is F107 fimbrial protein (fedA) from Escherichia coli.